Consider the following 306-residue polypeptide: Protease HtpX homolog (306 aa).

The next 2 helical transmembrane spans lie at 10–30 and 33–53; these read TTLLFALMWAIIMLIWWATGG and QTLSIYIVIGLITTFGTYWFS. A Zn(2+)-binding site is contributed by H135. E136 is a catalytic residue. H139 is a binding site for Zn(2+). Transmembrane regions (helical) follow at residues 149-169 and 181-201; these read AIASAMATVISYLGYSLMYFG and GLGLIGALLSVILAPIAASLI. E210 contributes to the Zn(2+) binding site.

Belongs to the peptidase M48B family. It depends on Zn(2+) as a cofactor.

It localises to the cell membrane. The polypeptide is Protease HtpX homolog (Bifidobacterium longum (strain NCC 2705)).